The following is a 437-amino-acid chain: Serine carboxypeptidase-like 17 (437 aa).

The signal sequence occupies residues 1–26; it reads MGKECYYLSWILKFHLLLVLIQLVDS. Disulfide bonds link C85-C327, C249-C263, and C287-C293. N106 is a glycosylation site (N-linked (GlcNAc...) asparagine). The active site involves S181. D362 is an active-site residue. N378 is a glycosylation site (N-linked (GlcNAc...) asparagine). H415 is an active-site residue.

Belongs to the peptidase S10 family. As to expression, expressed in seedlings and siliques.

Its subcellular location is the secreted. Functionally, probable carboxypeptidase. This chain is Serine carboxypeptidase-like 17 (SCPL17), found in Arabidopsis thaliana (Mouse-ear cress).